Consider the following 357-residue polypeptide: DNA replication and repair protein RecF (357 aa).

30 to 37 (GANGSGKT) contributes to the ATP binding site.

It belongs to the RecF family.

The protein localises to the cytoplasm. Its function is as follows. The RecF protein is involved in DNA metabolism; it is required for DNA replication and normal SOS inducibility. RecF binds preferentially to single-stranded, linear DNA. It also seems to bind ATP. This Cronobacter sakazakii (strain ATCC BAA-894) (Enterobacter sakazakii) protein is DNA replication and repair protein RecF.